A 918-amino-acid polypeptide reads, in one-letter code: Aconitase-ribosomal protein bL21m fusion protein (918 aa).

A mitochondrion-targeting transit peptide spans 1 to 30; the sequence is MATFARMKLCLSGSSQAIPSKGISLVAARF. Residues 31 to 811 are homocitrate dehydratase, mitochondrial; that stretch reads QSTASRASYV…IDSIKQQPDH (781 aa). Substrate is bound by residues Gln105 and 198 to 200; that span reads DSH. Residues Cys394, Cys457, and Cys460 each coordinate [4Fe-4S] cluster. Substrate contacts are provided by residues Arg484, Arg489, Lys619, and 680-681; that span reads AR. The segment at 812–918 is large ribosomal subunit protein bL21m; it reads YADAYIFNRH…ILRVTELKLN (107 aa).

It in the N-terminal section; belongs to the aconitase/IPM isomerase family. The protein in the C-terminal section; belongs to the bacterial ribosomal protein bL21 family. As to quaternary structure, component of the mitochondrial large ribosomal subunit (mt-LSU). Mature yeast 74S mitochondrial ribosomes consist of a small (37S) and a large (54S) subunit. The 37S small subunit contains a 15S ribosomal RNA (15S mt-rRNA) and at least 32 different proteins. The 54S large subunit contains a 21S rRNA (21S mt-rRNA) and at least 45 different proteins. It depends on [4Fe-4S] cluster as a cofactor.

It localises to the mitochondrion. Its subcellular location is the nucleus. The catalysed reaction is (2R)-homocitrate = cis-homoaconitate + H2O. Its pathway is amino-acid biosynthesis; L-lysine biosynthesis via AAA pathway; L-alpha-aminoadipate from 2-oxoglutarate: step 2/5. Catalyzes the reversible dehydration of (R)-homocitrate to cis-homoaconitate, a step in the alpha-aminoadipate pathway for lysine biosynthesis. Its function is as follows. Component of the mitochondrial ribosome (mitoribosome), a dedicated translation machinery responsible for the synthesis of mitochondrial genome-encoded proteins, including at least some of the essential transmembrane subunits of the mitochondrial respiratory chain. The mitoribosomes are attached to the mitochondrial inner membrane and translation products are cotranslationally integrated into the membrane. The protein is Aconitase-ribosomal protein bL21m fusion protein (aco2) of Schizosaccharomyces pombe (strain 972 / ATCC 24843) (Fission yeast).